A 253-amino-acid chain; its full sequence is Ipsdienol dehydrogenase (253 aa).

NAD(+)-binding positions include 12-40 (VTGG…FSRN) and D63. S149 serves as a coordination point for substrate. Catalysis depends on Y162, which acts as the Proton acceptor. An NAD(+)-binding site is contributed by K166.

The protein belongs to the short-chain dehydrogenases/reductases (SDR) family. As to expression, specifically expressed in male midguts. Expressed at higher level in the anterior midgut of fed males.

The protein resides in the cytoplasm. It is found in the cytosol. It carries out the reaction (4R)-ipsdienol + NADP(+) = ipsdienone + NADPH + H(+). The enzyme catalyses (4R)-ipsdienol + NAD(+) = ipsdienone + NADH + H(+). Functionally, catalyzes the oxidation of racemic ipsdienol and (4R)-(-)-ipsdienol to form ipsdienone (2-methyl-6-methylene-2,7-octadien-4-one), an intermediate in the biosynthesis of pheromonal ipsdienol in male pine engraver beetles. In contrast, (4S)-(+)-ipsdienol is not a substrate. The polypeptide is Ipsdienol dehydrogenase (Ips pini (Pine engraver beetle)).